The chain runs to 805 residues: DNA gyrase subunit B (805 aa).

Residues 435–550 enclose the Toprim domain; sequence SEIFIVEGDS…RGYIYIAQPP (116 aa). Positions 441, 515, and 517 each coordinate Mg(2+).

The protein belongs to the type II topoisomerase GyrB family. Heterotetramer, composed of two GyrA and two GyrB chains. In the heterotetramer, GyrA contains the active site tyrosine that forms a transient covalent intermediate with DNA, while GyrB binds cofactors and catalyzes ATP hydrolysis. Mg(2+) serves as cofactor. Requires Mn(2+) as cofactor. The cofactor is Ca(2+).

Its subcellular location is the cytoplasm. It catalyses the reaction ATP-dependent breakage, passage and rejoining of double-stranded DNA.. A type II topoisomerase that negatively supercoils closed circular double-stranded (ds) DNA in an ATP-dependent manner to modulate DNA topology and maintain chromosomes in an underwound state. Negative supercoiling favors strand separation, and DNA replication, transcription, recombination and repair, all of which involve strand separation. Also able to catalyze the interconversion of other topological isomers of dsDNA rings, including catenanes and knotted rings. Type II topoisomerases break and join 2 DNA strands simultaneously in an ATP-dependent manner. This chain is DNA gyrase subunit B, found in Caulobacter vibrioides (strain ATCC 19089 / CIP 103742 / CB 15) (Caulobacter crescentus).